A 451-amino-acid chain; its full sequence is Eukaryotic translation initiation factor 3 subunit E (451 aa).

The 170-residue stretch at Thr256–Gln425 folds into the PCI domain.

Belongs to the eIF-3 subunit E family. Component of the eukaryotic translation initiation factor 3 (eIF-3) complex.

It is found in the cytoplasm. Component of the eukaryotic translation initiation factor 3 (eIF-3) complex, which is involved in protein synthesis of a specialized repertoire of mRNAs and, together with other initiation factors, stimulates binding of mRNA and methionyl-tRNAi to the 40S ribosome. The eIF-3 complex specifically targets and initiates translation of a subset of mRNAs involved in cell proliferation. The polypeptide is Eukaryotic translation initiation factor 3 subunit E (int6) (Aspergillus fumigatus (strain CBS 144.89 / FGSC A1163 / CEA10) (Neosartorya fumigata)).